A 342-amino-acid polypeptide reads, in one-letter code: Cytosolic Fe-S cluster assembly factor NBP35 (342 aa).

The segment at 1 to 45 (MGPSLETPEPVEDVLANPLKQKPQLVAPEPEHCPGPESEQAGTAD) is disordered. Positions 33, 47, 50, and 56 each coordinate [4Fe-4S] cluster. Position 86–93 (86–93 (GKGGVGKS)) interacts with ATP. [4Fe-4S] cluster-binding residues include Cys-259 and Cys-262.

It belongs to the Mrp/NBP35 ATP-binding proteins family. NUBP1/NBP35 subfamily. As to quaternary structure, heterotetramer of 2 NBP35 and 2 CFD1 chains. It depends on [4Fe-4S] cluster as a cofactor.

It is found in the cytoplasm. Its function is as follows. Component of the cytosolic iron-sulfur (Fe/S) protein assembly (CIA) machinery. Required for maturation of extramitochondrial Fe-S proteins. The NBP35-CFD1 heterotetramer forms a Fe-S scaffold complex, mediating the de novo assembly of an Fe-S cluster and its transfer to target apoproteins. This chain is Cytosolic Fe-S cluster assembly factor NBP35, found in Chaetomium globosum (strain ATCC 6205 / CBS 148.51 / DSM 1962 / NBRC 6347 / NRRL 1970) (Soil fungus).